The chain runs to 309 residues: Methionyl-tRNA formyltransferase (309 aa).

(6S)-5,6,7,8-tetrahydrofolate is bound at residue 109-112; it reads SLLP.

It belongs to the Fmt family.

The enzyme catalyses L-methionyl-tRNA(fMet) + (6R)-10-formyltetrahydrofolate = N-formyl-L-methionyl-tRNA(fMet) + (6S)-5,6,7,8-tetrahydrofolate + H(+). Functionally, attaches a formyl group to the free amino group of methionyl-tRNA(fMet). The formyl group appears to play a dual role in the initiator identity of N-formylmethionyl-tRNA by promoting its recognition by IF2 and preventing the misappropriation of this tRNA by the elongation apparatus. This Clostridium perfringens (strain SM101 / Type A) protein is Methionyl-tRNA formyltransferase.